The chain runs to 405 residues: Cysteine desulfurase IscS (405 aa).

Pyridoxal 5'-phosphate is bound by residues 75 to 76, N156, Q184, and 204 to 206; these read AT and SAH. Position 207 is an N6-(pyridoxal phosphate)lysine (K207). A pyridoxal 5'-phosphate-binding site is contributed by T244. The Cysteine persulfide intermediate role is filled by C329. C329 serves as a coordination point for [2Fe-2S] cluster.

This sequence belongs to the class-V pyridoxal-phosphate-dependent aminotransferase family. NifS/IscS subfamily. In terms of assembly, homodimer. Forms a heterotetramer with IscU, interacts with other sulfur acceptors. Pyridoxal 5'-phosphate serves as cofactor.

It is found in the cytoplasm. It catalyses the reaction (sulfur carrier)-H + L-cysteine = (sulfur carrier)-SH + L-alanine. It functions in the pathway cofactor biosynthesis; iron-sulfur cluster biosynthesis. Its function is as follows. Master enzyme that delivers sulfur to a number of partners involved in Fe-S cluster assembly, tRNA modification or cofactor biosynthesis. Catalyzes the removal of elemental sulfur atoms from cysteine to produce alanine. Functions as a sulfur delivery protein for Fe-S cluster synthesis onto IscU, an Fe-S scaffold assembly protein, as well as other S acceptor proteins. This is Cysteine desulfurase IscS from Methylobacillus flagellatus (strain ATCC 51484 / DSM 6875 / VKM B-1610 / KT).